Reading from the N-terminus, the 198-residue chain is dITP/XTP pyrophosphatase (198 aa).

7-12 serves as a coordination point for substrate; that stretch reads THNPHK. Residues glutamate 40 and aspartate 69 each contribute to the Mg(2+) site. The Proton acceptor role is filled by aspartate 69. Substrate is bound by residues threonine 70, 151-154, lysine 174, and 179-180; these read FGYD and HR.

It belongs to the HAM1 NTPase family. Homodimer. Mg(2+) is required as a cofactor.

The enzyme catalyses XTP + H2O = XMP + diphosphate + H(+). The catalysed reaction is dITP + H2O = dIMP + diphosphate + H(+). It carries out the reaction ITP + H2O = IMP + diphosphate + H(+). In terms of biological role, pyrophosphatase that catalyzes the hydrolysis of nucleoside triphosphates to their monophosphate derivatives, with a high preference for the non-canonical purine nucleotides XTP (xanthosine triphosphate), dITP (deoxyinosine triphosphate) and ITP. Seems to function as a house-cleaning enzyme that removes non-canonical purine nucleotides from the nucleotide pool, thus preventing their incorporation into DNA/RNA and avoiding chromosomal lesions. This chain is dITP/XTP pyrophosphatase, found in Thermoanaerobacter sp. (strain X514).